Consider the following 137-residue polypeptide: MLQPKRTKYRKQFKGRIKGVAKGGSDLAFGEFGLKAQEPNRVNAREIEAARRAITRHMKRAGRVWIRVFPDVPVTAKPTEVRMGKGKGSVEYWACKVKPGRMMFEIDGVNEELAREALRLGAAKLSVKTRFVQRIAE.

The protein belongs to the universal ribosomal protein uL16 family. As to quaternary structure, part of the 50S ribosomal subunit.

In terms of biological role, binds 23S rRNA and is also seen to make contacts with the A and possibly P site tRNAs. This is Large ribosomal subunit protein uL16 from Rhizobium meliloti (strain 1021) (Ensifer meliloti).